Here is a 261-residue protein sequence, read N- to C-terminus: Ribosome-inactivating protein PD-L1/PD-L2 (261 aa).

N-linked (GlcNAc...) asparagine; in PD-L1 and PD-L2 glycosylation is found at asparagine 10 and asparagine 43. 2 cysteine pairs are disulfide-bonded: cysteine 34/cysteine 258 and cysteine 84/cysteine 105. Residue tyrosine 72 is part of the active site. Valine 73 lines the substrate pocket. Serine 120 is a substrate binding site. Catalysis depends on residues tyrosine 122, glutamate 175, and arginine 178. Arginine 178 contributes to the substrate binding site. Asparagine 255 carries N-linked (GlcNAc...) asparagine; in PD-L1 glycosylation.

This sequence belongs to the ribosome-inactivating protein family. Type 1 RIP subfamily. In terms of processing, N-glycosylated. Loss of glycosylation does not affect DNA-cleaving ability. Loss of glycosylation does not affect protein synthesis inhibition, but increases adenine polynucleotide glycosidase activity likely as a consequence of the increased accessibility of substrates to the active site pocket in the absence of glycosylation. As to expression, expressed in leaves (at protein level).

It carries out the reaction Endohydrolysis of the N-glycosidic bond at one specific adenosine on the 28S rRNA.. Inhibits protein synthesis. Has adenine polynucleotide glycosidase activity on herring sperm (hs)DNA and poly(A) substrates. Cleaves supercoiled pBR322 dsDNA. In Phytolacca dioica (Bella sombra tree), this protein is Ribosome-inactivating protein PD-L1/PD-L2.